A 395-amino-acid polypeptide reads, in one-letter code: Tyrosine--tRNA ligase (395 aa).

The short motif at 42-51 (PTAPDIHLGH) is the 'HIGH' region element. The 'KMSKS' region motif lies at 226–230 (KMSKS). Residue K229 coordinates ATP. The 61-residue stretch at 334 to 394 (IGLATLLKEA…GKRKFARVTV (61 aa)) folds into the S4 RNA-binding domain.

Belongs to the class-I aminoacyl-tRNA synthetase family. TyrS type 2 subfamily. In terms of assembly, homodimer.

The protein localises to the cytoplasm. The catalysed reaction is tRNA(Tyr) + L-tyrosine + ATP = L-tyrosyl-tRNA(Tyr) + AMP + diphosphate + H(+). Its function is as follows. Catalyzes the attachment of tyrosine to tRNA(Tyr) in a two-step reaction: tyrosine is first activated by ATP to form Tyr-AMP and then transferred to the acceptor end of tRNA(Tyr). This Haemophilus influenzae (strain 86-028NP) protein is Tyrosine--tRNA ligase.